The primary structure comprises 168 residues: uncharacterized protein (168 aa).

The segment covering 1–15 (MKEASDREEAPKMVE) has biased composition (basic and acidic residues). Positions 1–36 (MKEASDREEAPKMVEKNYSTGFRKAHGEKDQSVTKP) are disordered.

It is found in the cytoplasm. This is an uncharacterized protein from Saccharomyces cerevisiae (strain ATCC 204508 / S288c) (Baker's yeast).